An 825-amino-acid polypeptide reads, in one-letter code: MAAGKFASLPRNMPVNHQFPLASSMDLLSSRSPLAEHRPDAYQDVSIHGTLPRKKKGPPPIRSCDDFSHMGTLPHSKSPRQNSPVTQDGIQESPWQDRHGETFTFRDPHLLDPTVEYVKFSKERHIMDRTPEKLKKELEEELLLSSEDLRSHAWYHGRIPRQVSENLVQRDGDFLVRDSLSSPGNFVLTCQWKNLAQHFKINRTVLRLSEAYSRVQYQFEMESFDSIPGLVRCYVGNRRPISQQSGAIIFQPINRTVPLRCLEEHYGTSPGQAREGSLTKGRPDVAKRLSLTMGGVQAREQNLPRGNLLRNKEKSGSQPACLDHMQDRRALSLKAHQSESYLPIGCKLPPQSSGVDTSPCPNSPVFRTGSEPALSPAVVRRVSSDARAGEALRGSDSQLCPKPPPKPCKVPFLKVPSSPSAWLNSEANYCELNPAFATGCGRGAKLPSCAQGSHTELLTAKQNEAPGPRNSGVNYLILDDDDRERPWEPAAAQMEKGQWDKGEFVTPLLETVSSFRPNEFESKFLPPENKPLETAMLKRAKELFTNNDPKVIAQHVLSMDCRVARILGVSEEMRRNMGVSSGLELITLPHGHQLRLDIIERHNTMAIGIAVDILGCTGTLEDRAATLSKIIQVAVELKDSMGDLYSFSALMKALEMPQITRLEKTWTALRHQYTQTAILYEKQLKPFSKLLHEGRESTCVPPNNVSVPLLMPLVTLMERQAVTFEGTDMWEKNDQSCEIMLNHLATARFMAEAADSYRMNAERILAGFQPDEEMNEICKTEFQMRLLWGSKGAQVNQTERYEKFNQILTALSRKLEPPPVKQAEL.

At Ala-2 the chain carries N-acetylalanine. Phosphoserine is present on residues Ser-32, Ser-78, and Ser-83. Residues Asp-40–Arg-106 are disordered. Over residues Pro-79–Pro-94 the composition is skewed to polar residues. The span at Trp-95–Arg-106 shows a compositional bias: basic and acidic residues. The SH2 domain occupies Trp-154–Ile-253. 2 positions are modified to phosphoserine: Ser-182 and Ser-290. Lys-334 bears the N6-methyllysine mark. 3 positions are modified to phosphoserine: Ser-358, Ser-363, and Ser-375. Omega-N-methylarginine is present on Arg-442. Ser-471 carries the post-translational modification Phosphoserine. In terms of domain architecture, Ras-GEF spans Asp-548–Pro-818. A mediates the interaction with BCAR1/p130CAS region spans residues Leu-744–Arg-748.

In terms of assembly, part of a complex comprised of PTPRA, BCAR1, BCAR3 (via SH2 domain) and SRC; the formation of the complex is dependent on integrin mediated-tyrosine phosphorylation of PTPRA. Within the complex, interacts (via SH2 domain) with PTPRA (when phosphorylated on 'Tyr-798'). Interacts (via Ras-GEF domain) with BCAR1. Interacts (via Ras-GEF domain) with NEDD9. Interacts with PTK2/FAK1. Interacts with PTPN1. Interacts (via SH2 domain) with EGFR (when tyrosine-phosphorylated). Post-translationally, phosphorylated on tyrosine residues. Ubiquitously expressed. Found in several cancer cell lines, but not in nonmalignant breast tissue.

The protein localises to the cytoplasm. The protein resides in the cell junction. It localises to the focal adhesion. In terms of biological role, acts as an adapter protein downstream of several growth factor receptors to promote cell proliferation, migration, and redistribution of actin fibers. Specifically involved in INS/insulin signaling pathway by mediating MAPK1/ERK2-MAPK3/ERK1 activation and DNA synthesis. Promotes insulin-mediated membrane ruffling. In response to vasoconstrictor peptide EDN1, involved in the activation of RAP1 downstream of PTK2B via interaction with phosphorylated BCAR1. Inhibits cell migration and invasion via regulation of TGFB-mediated matrix digestion, actin filament rearrangement, and inhibition of invadopodia activity. May inhibit TGFB-SMAD signaling, via facilitating BCAR1 and SMAD2 and/or SMAD3 interaction. Regulates EGF-induced DNA synthesis. Required for the maintenance of ocular lens morphology and structural integrity, potentially via regulation of focal adhesion complex signaling. Acts upstream of PTPRA to regulate the localization of BCAR1 and PTPRA to focal adhesions, via regulation of SRC-mediated phosphorylation of PTPRA. Positively regulates integrin-induced tyrosine phosphorylation of BCAR1. Acts as a guanine nucleotide exchange factor (GEF) for small GTPases RALA, RAP1A and RRAS. However, in a contrasting study, lacks GEF activity towards RAP1. The polypeptide is Breast cancer anti-estrogen resistance protein 3 (BCAR3) (Homo sapiens (Human)).